Reading from the N-terminus, the 73-residue chain is UPF0154 protein MYCGA5700 (73 aa).

Residues 5–25 (LALGLSIPLCLIVGAFVGYFV) form a helical membrane-spanning segment.

This sequence belongs to the UPF0154 family.

The protein resides in the membrane. The polypeptide is UPF0154 protein MYCGA5700 (Mycoplasmoides gallisepticum (strain R(low / passage 15 / clone 2)) (Mycoplasma gallisepticum)).